Consider the following 159-residue polypeptide: Large ribosomal subunit protein uL15 (159 aa).

The tract at residues Ala14–Ala44 is disordered. Residues Arg23–Asn35 are compositionally biased toward gly residues.

This sequence belongs to the universal ribosomal protein uL15 family. Part of the 50S ribosomal subunit.

Binds to the 23S rRNA. This Solidesulfovibrio magneticus (strain ATCC 700980 / DSM 13731 / RS-1) (Desulfovibrio magneticus) protein is Large ribosomal subunit protein uL15.